Here is a 239-residue protein sequence, read N- to C-terminus: Sugar fermentation stimulation protein homolog (239 aa).

The protein belongs to the SfsA family.

This Caulobacter vibrioides (strain ATCC 19089 / CIP 103742 / CB 15) (Caulobacter crescentus) protein is Sugar fermentation stimulation protein homolog.